We begin with the raw amino-acid sequence, 141 residues long: Large ribosomal subunit protein uL16 (141 aa).

Belongs to the universal ribosomal protein uL16 family. In terms of assembly, part of the 50S ribosomal subunit.

Binds 23S rRNA and is also seen to make contacts with the A and possibly P site tRNAs. The chain is Large ribosomal subunit protein uL16 from Kosmotoga olearia (strain ATCC BAA-1733 / DSM 21960 / TBF 19.5.1).